Reading from the N-terminus, the 319-residue chain is Protein HEXIM1 (319 aa).

Over residues 1–22 (MELIKEETAPEDDSRGRQRDCR) the composition is skewed to basic and acidic residues. Disordered stretches follow at residues 1–111 (MELI…KKRR), 157–223 (LMEE…LQKD), 262–286 (NNWL…RVRE), and 299–319 (NELL…SQPS). Over residues 24 to 35 (SVVSSKQVQRNQ) the composition is skewed to polar residues. The span at 49-61 (PMCRDRSDPEPRT) shows a compositional bias: basic and acidic residues. Residues 97 to 111 (GKKKHRRRPSKKKRR) are compositionally biased toward basic residues. Acidic residues predominate over residues 185–202 (TASEDENFEAEEDDEEEG). Positions 203 to 216 (GGGSDGMGRPGQAG) are enriched in gly residues. A coiled-coil region spans residues 240-306 (SKQELVREYL…ENNELLLKTP (67 aa)). Positions 306 to 319 (PASNEPGLNQSQPS) are enriched in polar residues.

It belongs to the HEXIM family. Homooligomer and heterooligomer. Core component of the 7SK RNP complex.

It localises to the nucleus. The protein resides in the cytoplasm. In terms of biological role, transcriptional regulator which functions as a general RNA polymerase II transcription inhibitor. Core component of the 7SK RNP complex: in cooperation with 7SK snRNA sequesters P-TEFb in a large inactive 7SK snRNP complex preventing RNA polymerase II phosphorylation and subsequent transcriptional elongation. Plays a role in the regulation of DNA virus-mediated innate immune response by assembling into the HDP-RNP complex, a complex that serves as a platform for IRF3 phosphorylation and subsequent innate immune response activation through the cGAS-STING pathway. This is Protein HEXIM1 (hexim1) from Danio rerio (Zebrafish).